Here is a 927-residue protein sequence, read N- to C-terminus: Heat shock protein hsp98 (927 aa).

The Clp R domain maps to 2–162 (TSKMEFTDRA…TDAIQAIRGT (161 aa)). Repeat regions lie at residues 7–87 (FTDR…LVRL) and 99–162 (MAPS…IRGT). The segment at 179–428 (LAKFTIDMTA…AVRVARESQP (250 aa)) is NBD1. 224-231 (GEPGVGKT) lines the ATP pocket. The stretch at 429–553 (EIIDSLERKL…AALNAAAAET (125 aa)) forms a coiled coil. The interval 454 to 473 (EASKARLEQAKKDAENVEEE) is disordered. An NBD2 region spans residues 562–752 (VGPDQINEIV…IVVMTSNLGA (191 aa)). Position 635 to 642 (635 to 642 (GPSGTGKT)) interacts with ATP. A disordered region spans residues 908 to 927 (EDAVDEVAPESEMDEDLYDD).

Belongs to the ClpA/ClpB family. Homohexamer, forming a ring with a central pore.

The protein resides in the cytoplasm. The protein localises to the nucleus. Required, in concert with Hsp40 and Hsp70 and small Hsps, for the dissociation, resolubilization and refolding of aggregates of damaged proteins after heat or other environmental stresses. Extracts proteins from aggregates by unfolding and threading them in an ATP-dependent process through the axial channel of the protein hexamer, after which they can be refolded by components of the Hsp70/Hsp40 chaperone system. In Neurospora crassa (strain ATCC 24698 / 74-OR23-1A / CBS 708.71 / DSM 1257 / FGSC 987), this protein is Heat shock protein hsp98 (hsp98).